Consider the following 241-residue polypeptide: Probable transcriptional regulatory protein RALTA_A0859 (241 aa).

The protein belongs to the TACO1 family.

It is found in the cytoplasm. In Cupriavidus taiwanensis (strain DSM 17343 / BCRC 17206 / CCUG 44338 / CIP 107171 / LMG 19424 / R1) (Ralstonia taiwanensis (strain LMG 19424)), this protein is Probable transcriptional regulatory protein RALTA_A0859.